A 206-amino-acid polypeptide reads, in one-letter code: Outer-membrane lipoprotein carrier protein (206 aa).

Positions M1–A23 are cleaved as a signal peptide.

Belongs to the LolA family. In terms of assembly, monomer.

Its subcellular location is the periplasm. Functionally, participates in the translocation of lipoproteins from the inner membrane to the outer membrane. Only forms a complex with a lipoprotein if the residue after the N-terminal Cys is not an aspartate (The Asp acts as a targeting signal to indicate that the lipoprotein should stay in the inner membrane). This chain is Outer-membrane lipoprotein carrier protein, found in Chromobacterium violaceum (strain ATCC 12472 / DSM 30191 / JCM 1249 / CCUG 213 / NBRC 12614 / NCIMB 9131 / NCTC 9757 / MK).